The following is a 517-amino-acid chain: MDIIGGQHLRQMWDDLADVYGHKTALICESSGGVVNRYSYLELNQEINRTANLFYTLGIRKGDKVALHLDNCPEFIFCWFGLAKIGAIMVPINARLLREESAWILQNSQACLLVTSAQFYPMYQQIQQEDATQLRHICLTDVALPADDGVSSFTQLKNQQPATLCYAPPLSTDDTAEILFTSGTTSRPKGVVITHYNLRFAGYYSAWQCALRDDDVYLTVMPAFHIDCQCTAAMAAFSAGATFVLVEKYSARAFWGQVQKYRATITECIPMMIRTLMVQPPSANDRQHRLREVMFYLNLSEQEKDTFCERFGVRLLTSYGMTETIVGIIGDRPGDKRRWPSIGRAGFCYDAEIRDDHNRPLPAGEIGEICIKGVPGKTIFKEYFLNPKATAKVLEADGWLHTGDTGYRDEEGFFYFIDRRCNMIKRGGENVSCVELENIIATHPKIQDIVVVGIKDSIRDEAIKAFVVLNEGETLSEEEFFRFCEQNMAKFKVPSYLEIRKDLPRNCSGKIIRKNLK.

The protein belongs to the ATP-dependent AMP-binding enzyme family.

The enzyme catalyses 4-(trimethylamino)butanoate + ATP + CoA = 4-(trimethylamino)butanoyl-CoA + AMP + diphosphate. The catalysed reaction is crotonobetaine + ATP + CoA = crotonobetainyl-CoA + AMP + diphosphate. It carries out the reaction (R)-carnitine + ATP + CoA = (R)-carnitinyl-CoA + AMP + diphosphate. The protein operates within amine and polyamine metabolism; carnitine metabolism. Functionally, catalyzes the transfer of CoA to carnitine, generating the initial carnitinyl-CoA needed for the CaiB reaction cycle. Also has activity toward crotonobetaine and gamma-butyrobetaine. The polypeptide is Crotonobetaine/carnitine--CoA ligase (Escherichia coli O157:H7).